The following is a 543-amino-acid chain: Serendipity locus protein alpha (543 aa).

The protein resides in the cytoplasm. It is found in the cell membrane. Functionally, required for the cellularization of the syncytial blastoderm embryo. Involved in the localization of the actin filaments just prior to and during plasma membrane invagination. Sry-alpha together with nullo and bnk may provide auxiliary functions, by acting both to stabilize a large and dynamic microfilament structure and regulate its functions. The polypeptide is Serendipity locus protein alpha (Sry-alpha) (Drosophila subobscura (Fruit fly)).